Here is a 422-residue protein sequence, read N- to C-terminus: Tyrosine--tRNA ligase (422 aa).

Y37 contributes to the L-tyrosine binding site. Residues 42 to 51 (PTEESLHIGH) carry the 'HIGH' region motif. 2 residues coordinate L-tyrosine: Y175 and Q179. Positions 235 to 239 (KFGKT) match the 'KMSKS' region motif. K238 serves as a coordination point for ATP. The region spanning 357–414 (KDLQEALVLTSLAQSRTQAKNMIISNSISINTEKIRKNHIFHEKDKLFGKFTLLSRGK) is the S4 RNA-binding domain.

It belongs to the class-I aminoacyl-tRNA synthetase family. TyrS type 1 subfamily. As to quaternary structure, homodimer.

The protein localises to the cytoplasm. The catalysed reaction is tRNA(Tyr) + L-tyrosine + ATP = L-tyrosyl-tRNA(Tyr) + AMP + diphosphate + H(+). In terms of biological role, catalyzes the attachment of tyrosine to tRNA(Tyr) in a two-step reaction: tyrosine is first activated by ATP to form Tyr-AMP and then transferred to the acceptor end of tRNA(Tyr). In Buchnera aphidicola subsp. Acyrthosiphon pisum (strain Tuc7), this protein is Tyrosine--tRNA ligase.